The chain runs to 195 residues: MNINFNNINLIISAVKKAQYPDTGLTEVALSGRSNVGKSTFINSMIGRKNMARTSQQPGKTQTLNFYNIDEQLIFVDVPGYGYAKVSKVQREKFGKMIEEYITQRENLKLVIQLVDLRHQPTEDDVLMYNYLKHFDIPTLVICTKEDKIAKGKVQKHIKRIKDKLELESGDNIISYSSIKNSKQQEIWNFIETYI.

An EngB-type G domain is found at 24–195 (GLTEVALSGR…EIWNFIETYI (172 aa)). Residues 32 to 39 (GRSNVGKS), 59 to 63 (GKTQT), 77 to 80 (DVPG), 144 to 147 (TKED), and 176 to 178 (YSS) each bind GTP. Positions 39 and 61 each coordinate Mg(2+).

It belongs to the TRAFAC class TrmE-Era-EngA-EngB-Septin-like GTPase superfamily. EngB GTPase family. Requires Mg(2+) as cofactor.

Functionally, necessary for normal cell division and for the maintenance of normal septation. This Staphylococcus epidermidis (strain ATCC 35984 / DSM 28319 / BCRC 17069 / CCUG 31568 / BM 3577 / RP62A) protein is Probable GTP-binding protein EngB.